A 691-amino-acid chain; its full sequence is MEEIKALYVDLNKLRNIGIMAHIDAGKTTTTERILYFTGRKHQIGSVDDGTATMDWMVQEKERGITITSAATTCLWKEHRINIIDTPGHVDFTIEVERSLRVLDGAVAVFDATAGVEPQSETVWRQADKYNVPRIAFMNKMDKTGADFEMAVQTMVERLGAHPIPVQLPMGAESDFAGVIDLIEMKAIRWLNPEGTEMVVEEIPTQWKDKADEAREDMIEKIAEVDDEIMEMYLEGEEPSIEQIHAALRRITIAGLGTPVFCGSAKMNLGIQPLLDGIVRYLPSPLDLPPVKGFDKAGNEIQVQPTENAPFVAYAFKIQTDPYVGKLTFLRVYSGKLEKGSYVINTTKGVKERVSRLIFLHADKREDVEYVRAGDIVGVIGMKSTITGDTVCEENTYVILEKMEFPEPVISIAIEPETKDDETKLSKALQSLLDEDPSLRAYVDQETGETILSGMGELHLEIIVDRLKREFNVNVRVGKPQVAYRETITKDVKIEGKYIRQSGGRGQYGHVVVQFEPLGLDKTFEFVDKTVGGVIPKQYIPAIEEGIREAMQVGVLAGYPVVGIKATLLDGSYHEVDSSEMAFKIAASMAFKEAMEKGNPVLLEPIMKVEVTTPEDYMGNIIADLNSRRAHIDALENRGHLRVVKALVPLSEMFGYATTLRSLSQGRANYTMVLSHYEKVPEKVAEKILKG.

A tr-type G domain is found at 12 to 286 (NKLRNIGIMA…GIVRYLPSPL (275 aa)). GTP-binding positions include 21 to 28 (AHIDAGKT), 85 to 89 (DTPGH), and 139 to 142 (NKMD).

Belongs to the TRAFAC class translation factor GTPase superfamily. Classic translation factor GTPase family. EF-G/EF-2 subfamily.

It localises to the cytoplasm. Functionally, catalyzes the GTP-dependent ribosomal translocation step during translation elongation. During this step, the ribosome changes from the pre-translocational (PRE) to the post-translocational (POST) state as the newly formed A-site-bound peptidyl-tRNA and P-site-bound deacylated tRNA move to the P and E sites, respectively. Catalyzes the coordinated movement of the two tRNA molecules, the mRNA and conformational changes in the ribosome. The sequence is that of Elongation factor G from Fervidobacterium nodosum (strain ATCC 35602 / DSM 5306 / Rt17-B1).